The primary structure comprises 332 residues: Galactosylgalactosylxylosylprotein 3-beta-glucuronosyltransferase 1 (332 aa).

The Cytoplasmic portion of the chain corresponds to 1–6; the sequence is MPKRRD. The interval 3-5 is essential for transport from endoplasmic reticulum to Golgi apparatus and interaction with SAR1A; sequence KRR. Residues 7–27 traverse the membrane as a helical; Signal-anchor for type II membrane protein segment; that stretch reads ILAIVLIVLPWTLLITVWHQS. Residues 28-332 are Lumenal-facing; the sequence is TLAPLLAVHK…KGFTDPSVEI (305 aa). 91-93 lines the UDP-alpha-D-glucuronate pocket; that stretch reads PTY. T103 and T108 each carry phosphothreonine. D122 is a UDP-alpha-D-glucuronate binding site. An N-linked (GlcNAc...) asparagine glycan is attached at N140. R165 and R170 together coordinate UDP-alpha-D-glucuronate. Residue N184 is glycosylated (N-linked (GlcNAc...) asparagine). 195 to 197 lines the UDP-alpha-D-glucuronate pocket; that stretch reads DDD. D197 is a Mn(2+) binding site. The segment at 243-252 is interaction with galactose moiety of substrate glycoprotein; it reads FDPHRPFAID. The active-site Proton donor/acceptor is the E282. N301 is a glycosylation site (N-linked (GlcNAc...) asparagine). Residue 309-311 coordinates UDP-alpha-D-glucuronate; it reads HTR.

The protein belongs to the glycosyltransferase 43 family. In terms of assembly, homodimer. Interacts with SAR1A. It depends on Mn(2+) as a cofactor. In terms of processing, the soluble form derives from the membrane form by proteolytic processing.

The protein resides in the golgi apparatus membrane. The protein localises to the secreted. It carries out the reaction 3-O-(beta-D-galactosyl-(1-&gt;3)-beta-D-galactosyl-(1-&gt;4)-beta-D-xylosyl)-L-seryl-[protein] + UDP-alpha-D-glucuronate = 3-O-(beta-D-GlcA-(1-&gt;3)-beta-D-Gal-(1-&gt;3)-beta-D-Gal-(1-&gt;4)-beta-D-Xyl)-L-seryl-[protein] + UDP + H(+). It participates in protein modification; protein glycosylation. Involved in the biosynthesis of L2/HNK-1 carbohydrate epitope on glycoproteins. Can also play a role in glycosaminoglycan biosynthesis. Substrates include asialo-orosomucoid (ASOR), asialo-fetuin, and asialo-neural cell adhesion molecule. Requires sphingomyelin for activity: stearoyl-sphingomyelin was the most effective, followed by palmitoyl-sphingomyelin and lignoceroyl-sphingomyelin. Activity was demonstrated only for sphingomyelin with a saturated fatty acid and not for that with an unsaturated fatty acid, regardless of the length of the acyl group. In Pan troglodytes (Chimpanzee), this protein is Galactosylgalactosylxylosylprotein 3-beta-glucuronosyltransferase 1.